The chain runs to 388 residues: Succinate--CoA ligase [ADP-forming] subunit beta (388 aa).

Residues lysine 9–glutamate 244 enclose the ATP-grasp domain. ATP contacts are provided by residues lysine 46, glycine 53–glycine 55, glutamate 99, valine 102, and glutamate 107. Mg(2+)-binding residues include asparagine 199 and aspartate 213. Residues asparagine 264 and glycine 321–leucine 323 contribute to the substrate site.

The protein belongs to the succinate/malate CoA ligase beta subunit family. Heterotetramer of two alpha and two beta subunits. Requires Mg(2+) as cofactor.

The catalysed reaction is succinate + ATP + CoA = succinyl-CoA + ADP + phosphate. It catalyses the reaction GTP + succinate + CoA = succinyl-CoA + GDP + phosphate. It functions in the pathway carbohydrate metabolism; tricarboxylic acid cycle; succinate from succinyl-CoA (ligase route): step 1/1. In terms of biological role, succinyl-CoA synthetase functions in the citric acid cycle (TCA), coupling the hydrolysis of succinyl-CoA to the synthesis of either ATP or GTP and thus represents the only step of substrate-level phosphorylation in the TCA. The beta subunit provides nucleotide specificity of the enzyme and binds the substrate succinate, while the binding sites for coenzyme A and phosphate are found in the alpha subunit. This is Succinate--CoA ligase [ADP-forming] subunit beta from Desulfosudis oleivorans (strain DSM 6200 / JCM 39069 / Hxd3) (Desulfococcus oleovorans).